Here is a 427-residue protein sequence, read N- to C-terminus: Trigger factor (427 aa).

The region spanning glycine 160 to proline 240 is the PPIase FKBP-type domain.

It belongs to the FKBP-type PPIase family. Tig subfamily.

It is found in the cytoplasm. It carries out the reaction [protein]-peptidylproline (omega=180) = [protein]-peptidylproline (omega=0). Involved in protein export. Acts as a chaperone by maintaining the newly synthesized protein in an open conformation. Functions as a peptidyl-prolyl cis-trans isomerase. The sequence is that of Trigger factor from Chlorobaculum parvum (strain DSM 263 / NCIMB 8327) (Chlorobium vibrioforme subsp. thiosulfatophilum).